Here is a 50-residue protein sequence, read N- to C-terminus: Insulin-1 (50 aa).

3 disulfides stabilise this stretch: C7–C36, C19–C49, and C35–C40.

It belongs to the insulin family. Heterodimer of a B chain and an A chain linked by two disulfide bonds.

The protein localises to the secreted. Insulin decreases blood glucose concentration. It increases cell permeability to monosaccharides, amino acids and fatty acids. It accelerates glycolysis, the pentose phosphate cycle, and glycogen synthesis in liver. This is Insulin-1 from Katsuwonus pelamis (Skipjack tuna).